Consider the following 316-residue polypeptide: Transaldolase (316 aa).

Catalysis depends on Lys131, which acts as the Schiff-base intermediate with substrate.

The protein belongs to the transaldolase family. Type 1 subfamily. As to quaternary structure, homodimer.

It localises to the cytoplasm. It catalyses the reaction D-sedoheptulose 7-phosphate + D-glyceraldehyde 3-phosphate = D-erythrose 4-phosphate + beta-D-fructose 6-phosphate. The protein operates within carbohydrate degradation; pentose phosphate pathway; D-glyceraldehyde 3-phosphate and beta-D-fructose 6-phosphate from D-ribose 5-phosphate and D-xylulose 5-phosphate (non-oxidative stage): step 2/3. In terms of biological role, transaldolase is important for the balance of metabolites in the pentose-phosphate pathway. This chain is Transaldolase, found in Buchnera aphidicola subsp. Acyrthosiphon pisum (strain 5A).